Here is a 959-residue protein sequence, read N- to C-terminus: Translation initiation factor IF-2 (959 aa).

The segment covering 1-10 (MSDKTNDDKT) has biased composition (basic and acidic residues). The disordered stretch occupies residues 1–374 (MSDKTNDDKT…SQMQETREKI (374 aa)). The segment covering 27 to 37 (EQSTVRQNFSH) has biased composition (polar residues). Low complexity-rich tracts occupy residues 63 to 118 (AAAA…VTKP) and 128 to 138 (QRPGGQQAQRP). Composition is skewed to basic and acidic residues over residues 154–225 (SEMD…EAAK) and 232–241 (ARSERRDDAR). The span at 246 to 284 (GARPQQAGRPQGGRPQPAGRPQQGSPRPAPIIADAAPIA) shows a compositional bias: low complexity. The span at 318 to 333 (PEVRAPKVVKGEDDRR) shows a compositional bias: basic and acidic residues. The tr-type G domain occupies 457 to 626 (SRPPVVTIMG…LLQAEMLDLK (170 aa)). A G1 region spans residues 466–473 (GHVDHGKT). Position 466-473 (466-473 (GHVDHGKT)) interacts with GTP. A G2 region spans residues 491 to 495 (GITQH). Residues 512–515 (DTPG) form a G3 region. GTP contacts are provided by residues 512–516 (DTPGH) and 566–569 (NKID). Residues 566–569 (NKID) form a G4 region. Positions 602 to 604 (SAK) are G5.

This sequence belongs to the TRAFAC class translation factor GTPase superfamily. Classic translation factor GTPase family. IF-2 subfamily.

Its subcellular location is the cytoplasm. In terms of biological role, one of the essential components for the initiation of protein synthesis. Protects formylmethionyl-tRNA from spontaneous hydrolysis and promotes its binding to the 30S ribosomal subunits. Also involved in the hydrolysis of GTP during the formation of the 70S ribosomal complex. This chain is Translation initiation factor IF-2, found in Brucella canis (strain ATCC 23365 / NCTC 10854 / RM-666).